Consider the following 204-residue polypeptide: Probable GTP-binding protein EngB (204 aa).

Residues 27 to 201 (SGIEIAFAGR…SEKLDQWFSP (175 aa)) form the EngB-type G domain. GTP-binding positions include 35-42 (GRSNAGKS), 62-66 (GRTQL), 80-83 (DLPG), 147-150 (TKAD), and 180-182 (FSA). Residues Ser-42 and Thr-64 each coordinate Mg(2+).

It belongs to the TRAFAC class TrmE-Era-EngA-EngB-Septin-like GTPase superfamily. EngB GTPase family. Requires Mg(2+) as cofactor.

Necessary for normal cell division and for the maintenance of normal septation. This chain is Probable GTP-binding protein EngB, found in Histophilus somni (strain 129Pt) (Haemophilus somnus).